A 302-amino-acid chain; its full sequence is D-alanine--D-alanine ligase (302 aa).

In terms of domain architecture, ATP-grasp spans 100-295 (KTVFDHHGIL…FNELIAKLIE (196 aa)). 126–180 (QDLEPPVFIKPNSGGSSLGMTFARTAEELEKGIETVFSLGDSALVEEYTKGIEVT) contributes to the ATP binding site. Positions 250, 262, and 264 each coordinate Mg(2+).

This sequence belongs to the D-alanine--D-alanine ligase family. The cofactor is Mg(2+). Requires Mn(2+) as cofactor.

It is found in the cytoplasm. It catalyses the reaction 2 D-alanine + ATP = D-alanyl-D-alanine + ADP + phosphate + H(+). It functions in the pathway cell wall biogenesis; peptidoglycan biosynthesis. Cell wall formation. The sequence is that of D-alanine--D-alanine ligase from Maridesulfovibrio salexigens (strain ATCC 14822 / DSM 2638 / NCIMB 8403 / VKM B-1763) (Desulfovibrio salexigens).